The primary structure comprises 341 residues: HTH-type sugar sensing transcriptional regulator TrmBL1 (341 aa).

Residues Ser-32 to Ser-53 constitute a DNA-binding region (H-T-H motif).

The protein belongs to the transcriptional regulator TrmB family. In terms of assembly, homotetramer. Forms homooctamers in the presence of maltotriose or maltose.

Its activity is regulated as follows. Repressor activity is regulated by binding of different sugars to TrmBL1. Binding of maltose and maltotriose results in derepression of the target genes. However, high sugar concentration results in formation of octamers with high affinity for DNA, which may prevent transcription of target genes. Global transcriptional repressor of the maltodextrin transport gene cluster (mdxE operon) and most likely of all genes encoding glycolytic enzymes. Acts by binding to the conserved TGM (Thermococcales-Glycolytic-Motif) sequences in their promoter region. Can also interact with non-TGM sequences. In Pyrococcus furiosus (strain ATCC 43587 / DSM 3638 / JCM 8422 / Vc1), this protein is HTH-type sugar sensing transcriptional regulator TrmBL1 (trmBL1).